Reading from the N-terminus, the 209-residue chain is Na(+)-translocating NADH-quinone reductase subunit D (209 aa).

The next 5 membrane-spanning stretches (helical) occupy residues 42–62, 66–86, 95–115, 131–151, and 178–198; these read VVMTIAVTLVTAFSSFFISLI, IPNSVRIIVQMAIIASLVIVV, FEISKQLSVFVGLIITNCIVM, FMDGIGNGLGYGVILVLVGFL, and NGLFLLAPSAFFIIGLLIWAL.

It belongs to the NqrDE/RnfAE family. In terms of assembly, composed of six subunits; NqrA, NqrB, NqrC, NqrD, NqrE and NqrF.

It localises to the cell inner membrane. The catalysed reaction is a ubiquinone + n Na(+)(in) + NADH + H(+) = a ubiquinol + n Na(+)(out) + NAD(+). In terms of biological role, NQR complex catalyzes the reduction of ubiquinone-1 to ubiquinol by two successive reactions, coupled with the transport of Na(+) ions from the cytoplasm to the periplasm. NqrA to NqrE are probably involved in the second step, the conversion of ubisemiquinone to ubiquinol. This is Na(+)-translocating NADH-quinone reductase subunit D from Serratia proteamaculans (strain 568).